The sequence spans 223 residues: RNA pyrophosphohydrolase (223 aa).

A Nudix hydrolase domain is found at 6–149 (GFRPNVGIIL…KRGVYEMALT (144 aa)). The short motif at 38–59 (GGIDRGESPEQAMFRELHEEVG) is the Nudix box element. The interval 175-223 (ERHMPDGGAPAGLDLPPGGSFDPHPDITSASDDPSPPPHNKAPFLPSQR) is disordered. Positions 180–193 (DGGAPAGLDLPPGG) are enriched in low complexity.

This sequence belongs to the Nudix hydrolase family. RppH subfamily. It depends on a divalent metal cation as a cofactor.

Its function is as follows. Accelerates the degradation of transcripts by removing pyrophosphate from the 5'-end of triphosphorylated RNA, leading to a more labile monophosphorylated state that can stimulate subsequent ribonuclease cleavage. This Variovorax paradoxus (strain S110) protein is RNA pyrophosphohydrolase.